The following is a 183-amino-acid chain: dCTP deaminase (183 aa).

Lys106 to Arg111 lines the dCTP pocket. The active-site Proton donor/acceptor is Glu132. Residues Gln151, Tyr165, and Gln175 each contribute to the dCTP site.

It belongs to the dCTP deaminase family. Homotrimer.

It catalyses the reaction dCTP + H2O + H(+) = dUTP + NH4(+). The protein operates within pyrimidine metabolism; dUMP biosynthesis; dUMP from dCTP (dUTP route): step 1/2. Functionally, catalyzes the deamination of dCTP to dUTP. The protein is dCTP deaminase of Gluconobacter oxydans (strain 621H) (Gluconobacter suboxydans).